The following is a 230-amino-acid chain: Demethylmenaquinone methyltransferase (230 aa).

S-adenosyl-L-methionine contacts are provided by residues Thr57, Asp77, 101 to 102 (DI), and Ser118.

Belongs to the class I-like SAM-binding methyltransferase superfamily. MenG/UbiE family.

The catalysed reaction is a 2-demethylmenaquinol + S-adenosyl-L-methionine = a menaquinol + S-adenosyl-L-homocysteine + H(+). Its pathway is quinol/quinone metabolism; menaquinone biosynthesis; menaquinol from 1,4-dihydroxy-2-naphthoate: step 2/2. Methyltransferase required for the conversion of demethylmenaquinol (DMKH2) to menaquinol (MKH2). The sequence is that of Demethylmenaquinone methyltransferase from Chlamydia caviae (strain ATCC VR-813 / DSM 19441 / 03DC25 / GPIC) (Chlamydophila caviae).